Here is a 172-residue protein sequence, read N- to C-terminus: Ribosome maturation factor RimM (172 aa).

Residues 96-168 (DGEFYYHEII…RIEVELMEGL (73 aa)) form the PRC barrel domain.

It belongs to the RimM family. Binds ribosomal protein uS19.

The protein resides in the cytoplasm. Functionally, an accessory protein needed during the final step in the assembly of 30S ribosomal subunit, possibly for assembly of the head region. Essential for efficient processing of 16S rRNA. May be needed both before and after RbfA during the maturation of 16S rRNA. It has affinity for free ribosomal 30S subunits but not for 70S ribosomes. In Streptococcus thermophilus (strain CNRZ 1066), this protein is Ribosome maturation factor RimM.